The sequence spans 105 residues: Precursor of CEP15 (105 aa).

The first 29 residues, 1–29 (MDATKIKFDVILLSFLLIISGIPSNLGLS), serve as a signal peptide directing secretion. Residues 30-90 (TSVRGTTRSE…PSPPVPDYDD (61 aa)) constitute a propeptide that is removed on maturation. Residues 68–80 (DYYDGGSSSSTTS) show a composition bias toward low complexity. The interval 68–105 (DYYDGGSSSSTTSPSPPVPDYDDIYRRQGDVPSPGIGH) is disordered. Residues P99 and P101 each carry the hydroxyproline modification.

Belongs to the C-terminally encoded plant signaling peptide (CEP) family. As to quaternary structure, interacts with CEP receptors (e.g. CEPR1 and CEPR2). In terms of processing, the mature small signaling peptide is generated by proteolytic processing of the longer precursor.

It localises to the secreted. Its subcellular location is the extracellular space. It is found in the apoplast. Extracellular signaling peptide that may regulate primary root growth rate and systemic nitrogen (N)-demand signaling. This chain is Precursor of CEP15, found in Arabidopsis thaliana (Mouse-ear cress).